The primary structure comprises 261 residues: Mite allergen Der p 3 (261 aa).

The signal sequence occupies residues 1–18 (MIIYNILIVLLLAINTLA). A propeptide spanning residues 19–29 (NPILPASPNAT) is cleaved from the precursor. The 231-residue stretch at 30–260 (IVGGEKALAG…FIDWIESKRS (231 aa)) folds into the Peptidase S1 domain. Residues C54 and C70 are joined by a disulfide bond. Residues H69 and D114 each act as charge relay system in the active site. Disulfide bonds link C181-C198 and C210-C236. Residue S214 is the Charge relay system of the active site.

The protein belongs to the peptidase S1 family.

Its subcellular location is the secreted. This Dermatophagoides pteronyssinus (European house dust mite) protein is Mite allergen Der p 3 (DERP3).